The following is a 700-amino-acid chain: Elongation factor G (700 aa).

One can recognise a tr-type G domain in the interval 10-285 (DRTRNIGIMA…AVIDYLPSPL (276 aa)). GTP contacts are provided by residues 19–26 (AHIDAGKT), 83–87 (DTPGH), and 137–140 (NKMD).

It belongs to the TRAFAC class translation factor GTPase superfamily. Classic translation factor GTPase family. EF-G/EF-2 subfamily.

The protein resides in the cytoplasm. Catalyzes the GTP-dependent ribosomal translocation step during translation elongation. During this step, the ribosome changes from the pre-translocational (PRE) to the post-translocational (POST) state as the newly formed A-site-bound peptidyl-tRNA and P-site-bound deacylated tRNA move to the P and E sites, respectively. Catalyzes the coordinated movement of the two tRNA molecules, the mRNA and conformational changes in the ribosome. The chain is Elongation factor G from Lacticaseibacillus paracasei (strain ATCC 334 / BCRC 17002 / CCUG 31169 / CIP 107868 / KCTC 3260 / NRRL B-441) (Lactobacillus paracasei).